A 729-amino-acid chain; its full sequence is Glycine--tRNA ligase (729 aa).

Residues 1–33 constitute a mitochondrion transit peptide; it reads MPCLLPSLLRATRAALPLLSPPRVVAASASQRL. Residues 53–109 form the WHEP-TRS domain; the sequence is LLAPLRLAVRQQGDFVRKLKEDKAPQVDVDRAVAELKARKRVLEAKELALQPKDDIV. N6-acetyllysine is present on Lys-194. A glycine-binding site is contributed by Glu-289. ATP-binding positions include 321–323 and 332–333; these read RNE and RV. Glu-340 contacts glycine. Residue Tyr-443 is modified to Phosphotyrosine. 447-448 contributes to the ATP binding site; that stretch reads EI. Lys-491 is subject to N6-acetyllysine. 566–568 provides a ligand contact to glycine; sequence EPS. An ATP-binding site is contributed by Arg-573. Position 690 is a phosphoserine (Ser-690). Thr-726 is modified (phosphothreonine).

This sequence belongs to the class-II aminoacyl-tRNA synthetase family. As to quaternary structure, homodimer.

The protein localises to the cytoplasm. The protein resides in the mitochondrion. Its subcellular location is the cell projection. It is found in the axon. It localises to the secreted. The protein localises to the extracellular exosome. It catalyses the reaction tRNA(Gly) + glycine + ATP = glycyl-tRNA(Gly) + AMP + diphosphate. It carries out the reaction 2 ATP + H(+) = P(1),P(4)-bis(5'-adenosyl) tetraphosphate + diphosphate. In terms of biological role, catalyzes the ATP-dependent ligation of glycine to the 3'-end of its cognate tRNA, via the formation of an aminoacyl-adenylate intermediate (Gly-AMP). Also produces diadenosine tetraphosphate (Ap4A), a universal pleiotropic signaling molecule needed for cell regulation pathways, by direct condensation of 2 ATPs. Thereby, may play a special role in Ap4A homeostasis. In Mus musculus (Mouse), this protein is Glycine--tRNA ligase (Gars1).